The chain runs to 397 residues: MSEATIDSMLKDLPFPSNILNTLREDVLKAGVSKKEMEEIIEKMMEEYATSCIEPCDAAGVVAAQSIGEPGTQMTMRTFHYAGVAEINVTLGLPRLIEIVDARKIPSTPMMTIALSKEHPEDYAYDREKTRALAWEIEATKIDHIADVTTDLSQMKLIIDLHEKAMEGRNITIDQVKEKFNEELNVLVSISPDIDNQIVITPGEPSYRELLQLAKSIHNVTLKGIEGIKRVVVRKEGEEYTLYTEGSALRDVLQFEGVDKTRTSTNNINEIYEVLGIEAARNAIIKEATDTLREQGLTVDIRHIMLVADLMTCDGEVKQIGRHGISGEKASVFARAAFEVTVNHLLDAGMRGDVDQLQGVTENIIVGQPIRMGTGDVHLISRRVEKVEAKELEAEEE.

It belongs to the RNA polymerase beta' chain family. Part of the RNA polymerase complex.

The protein localises to the cytoplasm. The enzyme catalyses RNA(n) + a ribonucleoside 5'-triphosphate = RNA(n+1) + diphosphate. DNA-dependent RNA polymerase (RNAP) catalyzes the transcription of DNA into RNA using the four ribonucleoside triphosphates as substrates. Forms part of the jaw domain. The chain is DNA-directed RNA polymerase subunit Rpo1C from Methanosarcina acetivorans (strain ATCC 35395 / DSM 2834 / JCM 12185 / C2A).